The chain runs to 309 residues: Movement protein (309 aa).

Positions 245–273 are disordered; sequence HLSLNESKTLPSTSTTEAEGSERRIHIGA. Residues 246-262 show a composition bias toward polar residues; it reads LSLNESKTLPSTSTTEA.

It is found in the host cell junction. The protein resides in the host plasmodesma. In terms of biological role, transports viral genome to neighboring plant cells directly through plasmosdesmata, without any budding. The movement protein allows efficient cell to cell propagation, by bypassing the host cell wall barrier. Acts by forming a tubular structure at the host plasmodesmata, enlarging it enough to allow free passage of virion capsids. The polypeptide is Movement protein (Solanum lycopersicum (Tomato)).